A 207-amino-acid chain; its full sequence is Small ribosomal subunit protein uS10m (207 aa).

A mitochondrion-targeting transit peptide spans 1–24 (MLSVFGLRTVARCNSTLASGGARA).

The protein belongs to the universal ribosomal protein uS10 family. In terms of assembly, part of the mitochondrial small ribosomal subunit.

The protein localises to the mitochondrion. In terms of biological role, involved in mitochondrial genome encoded proteins translation. Involved in the binding of tRNA to the ribosomes. In Eremothecium gossypii (strain ATCC 10895 / CBS 109.51 / FGSC 9923 / NRRL Y-1056) (Yeast), this protein is Small ribosomal subunit protein uS10m (RSM10).